The sequence spans 341 residues: Anthranilate phosphoribosyltransferase (341 aa).

5-phospho-alpha-D-ribose 1-diphosphate-binding positions include G79, 82–83 (GD), T87, 89–92 (NIST), 107–115 (KHGNRAVSS), and S119. G79 is a binding site for anthranilate. Mg(2+) is bound at residue S91. N110 contacts anthranilate. R165 lines the anthranilate pocket. Positions 224 and 225 each coordinate Mg(2+).

It belongs to the anthranilate phosphoribosyltransferase family. Homodimer. Mg(2+) serves as cofactor.

The enzyme catalyses N-(5-phospho-beta-D-ribosyl)anthranilate + diphosphate = 5-phospho-alpha-D-ribose 1-diphosphate + anthranilate. Its pathway is amino-acid biosynthesis; L-tryptophan biosynthesis; L-tryptophan from chorismate: step 2/5. Catalyzes the transfer of the phosphoribosyl group of 5-phosphorylribose-1-pyrophosphate (PRPP) to anthranilate to yield N-(5'-phosphoribosyl)-anthranilate (PRA). This Bacillus thuringiensis subsp. konkukian (strain 97-27) protein is Anthranilate phosphoribosyltransferase.